A 160-amino-acid chain; its full sequence is Small ribosomal subunit protein uS7 (160 aa).

This sequence belongs to the universal ribosomal protein uS7 family. As to quaternary structure, part of the 30S ribosomal subunit. Contacts proteins S9 and S11.

Its function is as follows. One of the primary rRNA binding proteins, it binds directly to 16S rRNA where it nucleates assembly of the head domain of the 30S subunit. Is located at the subunit interface close to the decoding center, probably blocks exit of the E-site tRNA. In Rickettsia canadensis (strain McKiel), this protein is Small ribosomal subunit protein uS7.